We begin with the raw amino-acid sequence, 133 residues long: Large ribosomal subunit protein bL19 (133 aa).

The tract at residues 114–133 (IAERQMTAASKEEPAEKSEA) is disordered. Residues 123-133 (SKEEPAEKSEA) are compositionally biased toward basic and acidic residues.

Belongs to the bacterial ribosomal protein bL19 family.

Its function is as follows. This protein is located at the 30S-50S ribosomal subunit interface and may play a role in the structure and function of the aminoacyl-tRNA binding site. The sequence is that of Large ribosomal subunit protein bL19 from Phenylobacterium zucineum (strain HLK1).